The chain runs to 100 residues: Urease subunit gamma (100 aa).

The protein belongs to the urease gamma subunit family. In terms of assembly, heterotrimer of UreA (gamma), UreB (beta) and UreC (alpha) subunits. Three heterotrimers associate to form the active enzyme.

Its subcellular location is the cytoplasm. It carries out the reaction urea + 2 H2O + H(+) = hydrogencarbonate + 2 NH4(+). The protein operates within nitrogen metabolism; urea degradation; CO(2) and NH(3) from urea (urease route): step 1/1. This chain is Urease subunit gamma, found in Jannaschia sp. (strain CCS1).